The sequence spans 543 residues: Type I restriction enzyme MpnII methylase subunit (543 aa).

S-adenosyl-L-methionine is bound by residues 208-213, 240-242, and E265; these read EFFTPQ and SGS.

This sequence belongs to the N(4)/N(6)-methyltransferase family. In terms of assembly, the methyltransferase is composed of M and S polypeptides.

The enzyme catalyses a 2'-deoxyadenosine in DNA + S-adenosyl-L-methionine = an N(6)-methyl-2'-deoxyadenosine in DNA + S-adenosyl-L-homocysteine + H(+). Its function is as follows. The subtype gamma methyltransferase (M) subunit of a type I restriction enzyme. The M and S subunits together form a methyltransferase (MTase) that probably methylates A-2 on the top strand and A-3 on the bottom strand of the sequence 5'-GAN(7)TAY-3'. As the bacterial DNA is methylated on this sequence and this is the only type I methylase in the genome, it is probably responsible for all of the methylation on this site in the genome. The R subunit has multiple frameshifts and is probably not expressed in this bacteria. The protein is Type I restriction enzyme MpnII methylase subunit of Mycoplasma pneumoniae (strain ATCC 29342 / M129 / Subtype 1) (Mycoplasmoides pneumoniae).